The chain runs to 351 residues: DNA integrity scanning protein DisA (351 aa).

Residues 4-142 (RSGFWQVLQQ…GPMKYILRDF (139 aa)) enclose the DAC domain. ATP is bound by residues Gly-71, Leu-89, and 102–106 (TRHRT).

Belongs to the DisA family. In terms of assembly, homooctamer. Mg(2+) serves as cofactor.

The catalysed reaction is 2 ATP = 3',3'-c-di-AMP + 2 diphosphate. Its function is as follows. Participates in a DNA-damage check-point that is active prior to asymmetric division when DNA is damaged. DisA forms globular foci that rapidly scan along the chromosomes during sporulation, searching for lesions. When a lesion is present, DisA pauses at the lesion site. This triggers a cellular response that culminates in a temporary block in sporulation initiation. Functionally, also has diadenylate cyclase activity, catalyzing the condensation of 2 ATP molecules into cyclic di-AMP (c-di-AMP). c-di-AMP acts as a signaling molecule that couples DNA integrity with progression of sporulation. The rise in c-di-AMP level generated by DisA while scanning the chromosome, operates as a positive signal that advances sporulation; upon encountering a lesion, the DisA focus arrests at the damaged site and halts c-di-AMP synthesis. The sequence is that of DNA integrity scanning protein DisA from Symbiobacterium thermophilum (strain DSM 24528 / JCM 14929 / IAM 14863 / T).